Reading from the N-terminus, the 483-residue chain is Zinc metalloproteinase/disintegrin (483 aa).

A signal peptide spans 1–20 (MIQVLLVTICLAVFPYQGSS). The propeptide occupies 21–190 (IILESGNVND…KASQLYLTPE (170 aa)). Residues 197–395 (RYIELAIVVD…RNPQCILNAP (199 aa)) enclose the Peptidase M12B domain. E200 is a binding site for Ca(2+). An N-linked (GlcNAc...) asparagine glycan is attached at N263. D284 provides a ligand contact to Ca(2+). An N-linked (GlcNAc...) asparagine glycan is attached at N293. 3 disulfides stabilise this stretch: C308-C390, C352-C374, and C354-C357. A Zn(2+)-binding site is contributed by H333. E334 is a catalytic residue. Zn(2+) is bound by residues H337 and H343. C390 and N393 together coordinate Ca(2+). A propeptide spanning residues 396-413 (LRTDTVSTPVSGNEFLEA) is cleaved from the precursor. The Disintegrin domain maps to 403–483 (TPVSGNEFLE…SNDCPRWNDL (81 aa)). 6 disulfide bridges follow: C417-C432, C419-C427, C426-C449, C440-C446, C445-C470, and C458-C477. The short motif at 462–464 (RGD) is the Cell attachment site element.

Belongs to the venom metalloproteinase (M12B) family. P-II subfamily. P-IIa sub-subfamily. In terms of assembly, monomeric (disintegrin). Zn(2+) serves as cofactor. Expressed by the venom gland.

The protein resides in the secreted. In terms of biological role, impairs hemostasis in the envenomed animal. Its function is as follows. Inhibits platelet aggregation induced by ADP, thrombin, platelet-activating factor and collagen. Acts by inhibiting fibrinogen interaction with platelet receptors GPIIb/GPIIIa (ITGA2B/ITGB3). In Protobothrops flavoviridis (Habu), this protein is Zinc metalloproteinase/disintegrin.